The chain runs to 406 residues: Glycosyltransferase GlyE (406 aa).

Residues 3–265 (NTKRAVVFAG…SVILNEWFSK (263 aa)) are GT8 domain. Residues 11–16 (AGDYAY) and 106–107 (DS) each bind UDP. D106, D108, and H227 together coordinate Mn(2+). Residue 227–233 (HYISQDK) participates in UDP binding.

It in the N-terminal section; belongs to the glycosyltransferase 8 family. It depends on Mn(2+) as a cofactor.

Its pathway is protein modification; protein glycosylation. In terms of biological role, involved in the polymorphic O-glycosylation of the serine-rich repeat protein PsrP. Catalyzes the third step in glycosylation of PsrP in this bacteria. Transfers galactose from UDP-galactose to the terminal glucose moiety of already-glycosylated PsrP (using the short substrate PsrP-GlcNAc-Glc). Has a very marked preference for PsrP substrate that has already been modified by GlcNAc and glucose. Has hydrolytic activity against UDP-galactose but none against UDP-glucose. Functionally, also catalyzes the fourth step in glycosylation of PsrP in this bacteria. Can transfer the sugar from UDP-galactose to the terminal sugar moiety of PsrP-GlcNAc-Glc-Glc and of PsrP-GlcNAc-Glc-Gal. This chain is Glycosyltransferase GlyE, found in Streptococcus pneumoniae serotype 4 (strain ATCC BAA-334 / TIGR4).